The following is a 180-amino-acid chain: ATP synthase subunit delta (180 aa).

This sequence belongs to the ATPase delta chain family. In terms of assembly, F-type ATPases have 2 components, F(1) - the catalytic core - and F(0) - the membrane proton channel. F(1) has five subunits: alpha(3), beta(3), gamma(1), delta(1), epsilon(1). F(0) has three main subunits: a(1), b(2) and c(10-14). The alpha and beta chains form an alternating ring which encloses part of the gamma chain. F(1) is attached to F(0) by a central stalk formed by the gamma and epsilon chains, while a peripheral stalk is formed by the delta and b chains.

Its subcellular location is the cell membrane. In terms of biological role, f(1)F(0) ATP synthase produces ATP from ADP in the presence of a proton or sodium gradient. F-type ATPases consist of two structural domains, F(1) containing the extramembraneous catalytic core and F(0) containing the membrane proton channel, linked together by a central stalk and a peripheral stalk. During catalysis, ATP synthesis in the catalytic domain of F(1) is coupled via a rotary mechanism of the central stalk subunits to proton translocation. Functionally, this protein is part of the stalk that links CF(0) to CF(1). It either transmits conformational changes from CF(0) to CF(1) or is implicated in proton conduction. The protein is ATP synthase subunit delta of Bacillus cytotoxicus (strain DSM 22905 / CIP 110041 / 391-98 / NVH 391-98).